The sequence spans 622 residues: MKENVASATVFTLLLFLNTCLLNGQLPPGKPEIFKCRSPNKETFTCWWRPGTDGGLPTNYSLTYHREGETLMHECPDYITGGPNSCHFGKQYTSMWRTYIMMVNATNQMGSSFSDELYVDVTYIVQPDPPLELAVEVKQPEDRKPYLWIKWSPPTLIDLKTGWFTLLYEIRLKPEKAAEWEIHFAGQQTEFKILSLHPGQKYLVQVRCKPDHGYWSAWSPATFIQIPSDFTMNDTTVWISVAVLSAVICLIIVWAVALKGYSMVTCIFPPVPGPKIKGFDAHLLEKGKSEELLSALGCQDFPPTSDYEDLLVEYLEVDDSEDQHLMSVHSKEHPSQGMKPTYLDPDTDSGRGSCDSPSLLSEKCEEPQANPSTFYDPEVIEKPENPETTHTWDPQCISMEGKIPYFHAGGSKCSTWPLPQPSQHNPRSSYHNITDVCELAVGPAGAPATLLNEAGKDALKSSQTIKSREEGKATQQREVESFHSETDQDTPWLLPQEKTPFGSAKPLDYVEIHKVNKDGALSLLPKQRENSGKPKKPGTPENNKEYAKVSGVMDNNILVLVPDPHAKNVACFEESAKEAPPSLEQNQAEKALANFTATSSKCRLQLGGLDYLDPACFTHSFH.

Residues 1–24 (MKENVASATVFTLLLFLNTCLLNG) form the signal peptide. The Extracellular segment spans residues 25–234 (QLPPGKPEIF…QIPSDFTMND (210 aa)). 2 Fibronectin type-III domains span residues 27 to 128 (PPGK…VQPD) and 129 to 229 (PPLE…IPSD). The cysteines at positions 36 and 46 are disulfide-linked. A glycan (N-linked (GlcNAc...) asparagine) is linked at N59. Residues C75 and C86 are joined by a disulfide bond. N104 carries N-linked (GlcNAc...) asparagine glycosylation. Zn(2+) contacts are provided by D211 and H212. Positions 215-219 (WSAWS) match the WSXWS motif motif. The N-linked (GlcNAc...) asparagine glycan is linked to N233. The chain crosses the membrane as a helical span at residues 235–258 (TTVWISVAVLSAVICLIIVWAVAL). Residues 259–622 (KGYSMVTCIF…DPACFTHSFH (364 aa)) lie on the Cytoplasmic side of the membrane. The short motif at 267–275 (IFPPVPGPK) is the Box 1 motif element. 3 disordered regions span residues 326-378 (MSVH…YDPE), 461-505 (SSQT…GSAK), and 520-545 (ALSLLPKQRENSGKPKKPGTPENNKE). A compositionally biased stretch (basic and acidic residues) spans 466 to 486 (KSREEGKATQQREVESFHSET).

Belongs to the type I cytokine receptor family. Type 1 subfamily. Homodimer upon hormone binding. Interacts with SMARCA1. Interacts with GH1. Interacts with CSH. Interacts with NEK3 and VAV2 and this interaction is prolactin-dependent. In terms of tissue distribution, expressed in breast, placenta, kidney, liver and pancreas.

It is found in the membrane. Its subcellular location is the secreted. In terms of biological role, this is a receptor for the anterior pituitary hormone prolactin (PRL). Acts as a prosurvival factor for spermatozoa by inhibiting sperm capacitation through suppression of SRC kinase activation and stimulation of AKT. Isoform 4 is unable to transduce prolactin signaling. Isoform 6 is unable to transduce prolactin signaling. The protein is Prolactin receptor (PRLR) of Homo sapiens (Human).